Here is an 868-residue protein sequence, read N- to C-terminus: Leucine--tRNA ligase (868 aa).

Residues 42–52 carry the 'HIGH' region motif; sequence PYPSGKLHMGH. The 'KMSKS' region motif lies at 627–631; the sequence is KMSKS. K630 serves as a coordination point for ATP.

Belongs to the class-I aminoacyl-tRNA synthetase family.

It is found in the cytoplasm. The enzyme catalyses tRNA(Leu) + L-leucine + ATP = L-leucyl-tRNA(Leu) + AMP + diphosphate. The protein is Leucine--tRNA ligase of Pseudomonas syringae pv. syringae (strain B728a).